The following is a 234-amino-acid chain: Large ribosomal subunit protein uL1 (234 aa).

The protein belongs to the universal ribosomal protein uL1 family. In terms of assembly, part of the 50S ribosomal subunit.

In terms of biological role, binds directly to 23S rRNA. The L1 stalk is quite mobile in the ribosome, and is involved in E site tRNA release. Functionally, protein L1 is also a translational repressor protein, it controls the translation of the L11 operon by binding to its mRNA. The protein is Large ribosomal subunit protein uL1 of Edwardsiella ictaluri (strain 93-146).